Consider the following 366-residue polypeptide: tRNA pseudouridine synthase B (366 aa).

The disordered stretch occupies residues 1 to 55; it reads MTVTTPDALLAPHDVQHAGADESAAQIRKPRDNNDPRNANRGGGNGKPRRDKRDV. Aspartate 92 (nucleophile) is an active-site residue.

The protein belongs to the pseudouridine synthase TruB family. Type 1 subfamily.

It carries out the reaction uridine(55) in tRNA = pseudouridine(55) in tRNA. Functionally, responsible for synthesis of pseudouridine from uracil-55 in the psi GC loop of transfer RNAs. The protein is tRNA pseudouridine synthase B of Rhodopseudomonas palustris (strain ATCC BAA-98 / CGA009).